A 297-amino-acid chain; its full sequence is Transcriptional regulator protein Pur-beta (297 aa).

Disordered regions lie at residues 1 to 26 (MADG…EQET) and 275 to 297 (QERH…VDDD). A2 carries the N-acetylalanine modification. The tract at residues 23-246 (EQETQELASK…LRVSEVKPSY (224 aa)) is DNA-binding. Residues 275 to 288 (QERHRDKMYERREE) are compositionally biased toward basic and acidic residues.

The protein belongs to the PUR DNA-binding protein family.

The protein resides in the nucleus. Functionally, transcriptional regulator which can act as an activator or a repressor. This chain is Transcriptional regulator protein Pur-beta (purb), found in Danio rerio (Zebrafish).